A 155-amino-acid chain; its full sequence is Large ribosomal subunit protein uL22c (155 aa).

This sequence belongs to the universal ribosomal protein uL22 family. In terms of assembly, part of the 50S ribosomal subunit.

It localises to the plastid. It is found in the chloroplast. In terms of biological role, this protein binds specifically to 23S rRNA. Its function is as follows. The globular domain of the protein is located near the polypeptide exit tunnel on the outside of the subunit, while an extended beta-hairpin is found that lines the wall of the exit tunnel in the center of the 70S ribosome. The polypeptide is Large ribosomal subunit protein uL22c (rpl22) (Solanum tuberosum (Potato)).